A 382-amino-acid polypeptide reads, in one-letter code: MKITKITTYRLPPRWMFLKIETDEGVVGWGEPVIEGRARTVEAAVHELGDYLIGQDPSRINDLWQVMYRAGFYRGGPILMSAIAGIDQALWDIKGKVLNSPVWQLMGGLVRDKIKAYSWVGGDRPANVIDGIKILREIGFDTFKLNGCEELGLIDNSRAVDAAVNTVAQIREAFGNQIEFGLDFHGRVSAPMAKVLIKELEPYRPLFIEEPVLAEQAEYYPKLAAQTHIPLAAGERMFSRFDFKRVLEAGGISILQPDLSHAGGITECYKIAGMAEAYDVTLAPHCPLGPIALAACLHIDFVSYNAVLQEQSMGIHYNKGAELLDFVKNKEDFSMVGGFFKPLTKPGLGVEIDEAKVIEFSKNAPDWRNPLWRHEDNSVAEW.

Aspartate 183 is a Mg(2+) binding site. Histidine 185 (proton donor) is an active-site residue. Glutamate 209 and glutamate 235 together coordinate Mg(2+). The Proton acceptor role is filled by histidine 285.

Belongs to the mandelate racemase/muconate lactonizing enzyme family. GalD subfamily. The cofactor is Mg(2+).

It catalyses the reaction D-galactonate = 2-dehydro-3-deoxy-D-galactonate + H2O. It functions in the pathway carbohydrate acid metabolism; D-galactonate degradation; D-glyceraldehyde 3-phosphate and pyruvate from D-galactonate: step 1/3. In terms of biological role, catalyzes the dehydration of D-galactonate to 2-keto-3-deoxy-D-galactonate. The protein is D-galactonate dehydratase 1 of Escherichia coli (strain SMS-3-5 / SECEC).